The primary structure comprises 161 residues: Nucleotide-binding protein Vapar_3769 (161 aa).

The protein belongs to the YajQ family.

Functionally, nucleotide-binding protein. In Variovorax paradoxus (strain S110), this protein is Nucleotide-binding protein Vapar_3769.